The following is an 85-amino-acid chain: MVCDPNGDDTGRTHATVPVSQLGYEACRDELMEVVRLLEQGGLDLDASLRLWERGEQLAKRCEEHLAGARQRVSDVLAGDEAQNG.

It belongs to the XseB family. Heterooligomer composed of large and small subunits.

It localises to the cytoplasm. It carries out the reaction Exonucleolytic cleavage in either 5'- to 3'- or 3'- to 5'-direction to yield nucleoside 5'-phosphates.. Functionally, bidirectionally degrades single-stranded DNA into large acid-insoluble oligonucleotides, which are then degraded further into small acid-soluble oligonucleotides. This chain is Exodeoxyribonuclease 7 small subunit, found in Mycobacterium bovis (strain ATCC BAA-935 / AF2122/97).